The following is a 539-amino-acid chain: Cell division control protein 6 homolog (539 aa).

The disordered stretch occupies residues 1-40 (MPAIAGPSSSPQKHVVGSRSESIGGVRSAEVNTSRKRKLI). Positions 35-38 (RKRK) match the Nuclear localization signal motif.

It belongs to the CDC6/cdc18 family. As to expression, highly expressed in roots, flower buds and etiolated seedlings. Expressed in leaves and stems. Highly expressed in proliferating cells such as root meristems, leaf primordia and young growing leaves, as well as cells undergoing endoreduplication cycles.

It localises to the nucleus. Functionally, may be involved in the initiation of DNA replication. May play a role in endoreduplication. Could act as one of the factors that contributes to maintain endoreduplication competence. In Arabidopsis thaliana (Mouse-ear cress), this protein is Cell division control protein 6 homolog.